A 355-amino-acid chain; its full sequence is UDP-N-acetylglucosamine--N-acetylmuramyl-(pentapeptide) pyrophosphoryl-undecaprenol N-acetylglucosamine transferase (355 aa).

UDP-N-acetyl-alpha-D-glucosamine contacts are provided by residues 13 to 15 (TGG), N125, R162, S190, I244, and Q289.

Belongs to the glycosyltransferase 28 family. MurG subfamily.

It is found in the cell inner membrane. It catalyses the reaction di-trans,octa-cis-undecaprenyl diphospho-N-acetyl-alpha-D-muramoyl-L-alanyl-D-glutamyl-meso-2,6-diaminopimeloyl-D-alanyl-D-alanine + UDP-N-acetyl-alpha-D-glucosamine = di-trans,octa-cis-undecaprenyl diphospho-[N-acetyl-alpha-D-glucosaminyl-(1-&gt;4)]-N-acetyl-alpha-D-muramoyl-L-alanyl-D-glutamyl-meso-2,6-diaminopimeloyl-D-alanyl-D-alanine + UDP + H(+). The protein operates within cell wall biogenesis; peptidoglycan biosynthesis. In terms of biological role, cell wall formation. Catalyzes the transfer of a GlcNAc subunit on undecaprenyl-pyrophosphoryl-MurNAc-pentapeptide (lipid intermediate I) to form undecaprenyl-pyrophosphoryl-MurNAc-(pentapeptide)GlcNAc (lipid intermediate II). This Neisseria meningitidis serogroup B (strain ATCC BAA-335 / MC58) protein is UDP-N-acetylglucosamine--N-acetylmuramyl-(pentapeptide) pyrophosphoryl-undecaprenol N-acetylglucosamine transferase.